The chain runs to 530 residues: Ubiquitin carboxyl-terminal hydrolase 17-like protein 22 (530 aa).

In terms of domain architecture, USP spans 80–375 (AGLQNMGNTC…QAYVLFYIQK (296 aa)). The active-site Nucleophile is the cysteine 89. Catalysis depends on histidine 334, which acts as the Proton acceptor. Basic and acidic residues-rich tracts occupy residues 382 to 392 (SESVSRGREPR) and 398 to 412 (DTDR…KRDH). Disordered regions lie at residues 382-412 (SESV…KRDH) and 476-530 (KNHH…LVCQ). The segment covering 484–495 (SSLLKLSSTTPT) has biased composition (low complexity). Over residues 496 to 505 (HQESMNTGTL) the composition is skewed to polar residues. Residues 510 to 524 (GRARRSKGKNKHSKR) are compositionally biased toward basic residues.

It belongs to the peptidase C19 family. USP17 subfamily.

It localises to the nucleus. The protein resides in the endoplasmic reticulum. The enzyme catalyses Thiol-dependent hydrolysis of ester, thioester, amide, peptide and isopeptide bonds formed by the C-terminal Gly of ubiquitin (a 76-residue protein attached to proteins as an intracellular targeting signal).. In terms of biological role, deubiquitinating enzyme that removes conjugated ubiquitin from specific proteins to regulate different cellular processes that may include cell proliferation, progression through the cell cycle, apoptosis, cell migration, and the cellular response to viral infection. The chain is Ubiquitin carboxyl-terminal hydrolase 17-like protein 22 (USP17L22) from Homo sapiens (Human).